The sequence spans 254 residues: Proteasome subunit alpha type-4 (254 aa).

The residue at position 60 (Thr-60) is a Phosphothreonine. Residues 235-254 (QIEQEKQEQQEQDKKKKSNH) form a disordered region. Positions 237–248 (EQEKQEQQEQDK) are enriched in basic and acidic residues.

The protein belongs to the peptidase T1A family. As to quaternary structure, the 26S proteasome consists of a 20S proteasome core and two 19S regulatory subunits. The 20S proteasome core is composed of 28 subunits that are arranged in four stacked rings, resulting in a barrel-shaped structure. The two end rings are each formed by seven alpha subunits, and the two central rings are each formed by seven beta subunits. The catalytic chamber with the active sites is on the inside of the barrel. Interacts with CIC1.

Its subcellular location is the cytoplasm. It localises to the nucleus. In terms of biological role, the proteasome degrades poly-ubiquitinated proteins in the cytoplasm and in the nucleus. It is essential for the regulated turnover of proteins and for the removal of misfolded proteins. The proteasome is a multicatalytic proteinase complex that is characterized by its ability to cleave peptides with Arg, Phe, Tyr, Leu, and Glu adjacent to the leaving group at neutral or slightly basic pH. It has an ATP-dependent proteolytic activity. The protein is Proteasome subunit alpha type-4 (PRE6) of Saccharomyces cerevisiae (strain ATCC 204508 / S288c) (Baker's yeast).